Consider the following 163-residue polypeptide: Cytosolic iron-sulfur assembly component 2B (163 aa).

Belongs to the MIP18 family. Component of the CIA complex. Component of the MMXD complex, which includes CIAO1, ERCC2, CIAO2B, MMS19 and SLC25A5. Interacts with CIAO1, ERCC2 and MMS19; the interactions are direct. Interacts with KIF4A; the interaction facilitates the transfer of Fe-S clusters to KIF4A to ensure proper localization of KIF4A to the mitotic machinery. Interacts with CCDC117; the interaction is direct.

The protein localises to the nucleus. It is found in the cytoplasm. The protein resides in the cytoskeleton. Its subcellular location is the spindle. Its function is as follows. Component of the cytosolic iron-sulfur protein assembly (CIA) complex, a multiprotein complex that mediates the incorporation of iron-sulfur cluster into extramitochondrial Fe/S proteins. As a CIA complex component and in collaboration with CIAO1 and MMS19, binds to and facilitates the assembly of most cytosolic-nuclear Fe/S proteins. As part of the mitotic spindle-associated MMXD complex it plays a role in chromosome segregation, probably by facilitating iron-sulfur cluster assembly into ERCC2/XPD. Together with MMS19, facilitates the transfer of Fe-S clusters to the motor protein KIF4A, which ensures proper localization of KIF4A to mitotic machinery components to promote the progression of mitosis. This is Cytosolic iron-sulfur assembly component 2B from Mus musculus (Mouse).